The sequence spans 115 residues: C-C motif chemokine 6 (115 aa).

A signal peptide spans 1-21 (MRHSKTAISFFILVAVLGSQA). 3 cysteine pairs are disulfide-bonded: Cys-49–Cys-72, Cys-50–Cys-88, and Cys-59–Cys-99.

This sequence belongs to the intercrine beta (chemokine CC) family.

It is found in the secreted. The chain is C-C motif chemokine 6 (Ccl6) from Rattus norvegicus (Rat).